Consider the following 117-residue polypeptide: Large ribosomal subunit protein bL20 (117 aa).

The protein belongs to the bacterial ribosomal protein bL20 family.

In terms of biological role, binds directly to 23S ribosomal RNA and is necessary for the in vitro assembly process of the 50S ribosomal subunit. It is not involved in the protein synthesizing functions of that subunit. In Mesomycoplasma hyopneumoniae (strain 7448) (Mycoplasma hyopneumoniae), this protein is Large ribosomal subunit protein bL20.